Here is a 497-residue protein sequence, read N- to C-terminus: Beta-glucosidase 8 (497 aa).

A signal peptide spans 1–22; it reads MKHFNLLSIILVIVLATSYIDA. Q42 contacts a beta-D-glucoside. N-linked (GlcNAc...) asparagine glycosylation occurs at N65. Residues H139 and 184-185 contribute to the a beta-D-glucoside site; that span reads NE. Catalysis depends on E185, which acts as the Proton donor. N202 is a glycosylation site (N-linked (GlcNAc...) asparagine). Residue Y319 participates in a beta-D-glucoside binding. N-linked (GlcNAc...) asparagine glycosylation occurs at N354. Residues E387, W430, and F446 each contribute to the a beta-D-glucoside site. E387 (nucleophile) is an active-site residue. 3 N-linked (GlcNAc...) asparagine glycosylation sites follow: N452, N474, and N490.

Belongs to the glycosyl hydrolase 1 family.

The catalysed reaction is Hydrolysis of terminal, non-reducing beta-D-glucosyl residues with release of beta-D-glucose.. The chain is Beta-glucosidase 8 from Arabidopsis thaliana (Mouse-ear cress).